A 444-amino-acid polypeptide reads, in one-letter code: Protein Z-dependent protease inhibitor (444 aa).

An N-terminal signal peptide occupies residues 1–21; the sequence is MKVVPSLLLSVLLAQVWLVPG. Positions 24–65 are disordered; that stretch reads PSPQSPETPAPQNQTSRVVQAPKEEEEDEQEASEEKASEEEK. Asparagine 36 carries N-linked (GlcNAc...) asparagine glycosylation. Serine 56 carries the post-translational modification Phosphoserine; by FAM20C. Residues 56 to 65 show a composition bias toward basic and acidic residues; sequence SEEKASEEEK. The heparin-binding stretch occupies residues 136-153; it reads TKPGLLPSLFKGLRETLS. N-linked (GlcNAc...) asparagine glycans are attached at residues asparagine 180, asparagine 197, and asparagine 295.

It belongs to the serpin family. As to quaternary structure, interacts with PROZ. Phosphorylated by FAM20C in the extracellular medium. As to expression, expressed by the liver and secreted in plasma.

Its subcellular location is the secreted. Inhibits activity of the coagulation protease factor Xa in the presence of PROZ, calcium and phospholipids. Also inhibits factor XIa in the absence of cofactors. This Homo sapiens (Human) protein is Protein Z-dependent protease inhibitor (SERPINA10).